Reading from the N-terminus, the 342-residue chain is Ketol-acid reductoisomerase (NADP(+)) (342 aa).

The 180-residue stretch at 2 to 181 (VKVYYNGDIK…GGARAGVLET (180 aa)) folds into the KARI N-terminal Rossmann domain. Residues 25-28 (YGSQ), R48, S52, and 82-85 (DEQQ) contribute to the NADP(+) site. Residue H107 is part of the active site. NADP(+) is bound at residue G133. One can recognise a KARI C-terminal knotted domain in the interval 182–327 (TFKEETETDL…RQLREMMPFV (146 aa)). D190, E194, E226, and E230 together coordinate Mg(2+). S251 is a substrate binding site.

This sequence belongs to the ketol-acid reductoisomerase family. Requires Mg(2+) as cofactor.

It carries out the reaction (2R)-2,3-dihydroxy-3-methylbutanoate + NADP(+) = (2S)-2-acetolactate + NADPH + H(+). It catalyses the reaction (2R,3R)-2,3-dihydroxy-3-methylpentanoate + NADP(+) = (S)-2-ethyl-2-hydroxy-3-oxobutanoate + NADPH + H(+). Its pathway is amino-acid biosynthesis; L-isoleucine biosynthesis; L-isoleucine from 2-oxobutanoate: step 2/4. It participates in amino-acid biosynthesis; L-valine biosynthesis; L-valine from pyruvate: step 2/4. Involved in the biosynthesis of branched-chain amino acids (BCAA). Catalyzes an alkyl-migration followed by a ketol-acid reduction of (S)-2-acetolactate (S2AL) to yield (R)-2,3-dihydroxy-isovalerate. In the isomerase reaction, S2AL is rearranged via a Mg-dependent methyl migration to produce 3-hydroxy-3-methyl-2-ketobutyrate (HMKB). In the reductase reaction, this 2-ketoacid undergoes a metal-dependent reduction by NADPH to yield (R)-2,3-dihydroxy-isovalerate. This Bacillus velezensis (strain DSM 23117 / BGSC 10A6 / LMG 26770 / FZB42) (Bacillus amyloliquefaciens subsp. plantarum) protein is Ketol-acid reductoisomerase (NADP(+)).